A 222-amino-acid chain; its full sequence is Twisted gastrulation protein homolog 1 (222 aa).

The first 24 residues, 1-24, serve as a signal peptide directing secretion; it reads MKSHYIVLALASLTFLLCLPVSQS. N-linked (GlcNAc...) asparagine glycans are attached at residues Asn80 and Asn146.

It belongs to the twisted gastrulation protein family. As to quaternary structure, interacts with CHRD and/or BMP4. This interaction enhances CHRD/BMP4 complex formation. Interacts with BMP7. Expressed in lymph node, liver, kidney, and lung. Expression in the kidney was stronger in the medulla than in the cortex, particularly in the cells surrounding the medullary tubules. Expressed in growth plate cartilage of long bones, ribs, and digits and to a lesser extent also in the resting zone of the epiphysis, trabecular bone, and vertebral cartilage. Expression seems to be absent from other skeletal tissues including muscle, skin, and fibroblasts.

The protein resides in the secreted. Its function is as follows. May be involved in dorsoventral axis formation. Seems to antagonize BMP signaling by forming ternary complexes with CHRD and BMPs, thereby preventing BMPs from binding to their receptors. In addition to the anti-BMP function, also has pro-BMP activity, partly mediated by cleavage and degradation of CHRD, which releases BMPs from ternary complexes. May be an important modulator of BMP-regulated cartilage development and chondrocyte differentiation. May play a role in thymocyte development. The chain is Twisted gastrulation protein homolog 1 (Twsg1) from Mus musculus (Mouse).